Here is a 58-residue protein sequence, read N- to C-terminus: Large ribosomal subunit protein bL32 (58 aa).

Belongs to the bacterial ribosomal protein bL32 family.

This is Large ribosomal subunit protein bL32 from Anaplasma marginale (strain Florida).